Here is a 560-residue protein sequence, read N- to C-terminus: MAVSVPGYSPSFKRPPETVRLRRKRSRDHGAAVPASLPEPAPRRAALAAGLPLRPFPTAGGRGGAAATIARRNPFARLDNRPRVSDEASEEPLRGPQGASGPLLDSNEENNLLWEDTSSHERTGTELSQSQRVSLSESDTWSSDGTELPVDWSIKTRLLFTSSQPFSWADHLKAQEEAQGLVQHCRATEVTLPQSIQDPKLSTALRCAFQQALVYWLHPAFSWLPLFPRIGADRKMAAKTSPWSADETLQHALMSDWSVSFTSLYNLLKTKLCPYFYVCSYQFTVLFRAAGLAGSSVITALISPTTRGLREAMRNEGIEFSLPLLEEIGHKKKVRDPSLESEEEQAVSDEDEEESFSWLEEIGVQDQIKKPDVISIKLRKEKHEVQMDHRPESVVLVKGLNTFKLLNFLINCKSLVATSGAQAGLPPTLLSPIAFRGASMQMLKARSSNVKTQALSGYRDKFSLDITGPVMPHALHSMSMLLRSSQRGSFSAGLYAHEPTAVFNVGLSLDKELDRKVAREDLANCGLHPKTLEQLSQRPVLGKSSLRSVEMSDYILSWRS.

Residues 1–140 (MAVSVPGYSP…QRVSLSESDT (140 aa)) are disordered. Residues 34–53 (PASLPEPAPRRAALAAGLPL) are compositionally biased toward low complexity. The span at 125-140 (TELSQSQRVSLSESDT) shows a compositional bias: polar residues.

Belongs to the DONSON family. In terms of assembly, component of the replisome complex composed of at least MCM2, MCM7, PCNA and TICRR; interaction at least with PCNA occurs during DNA replication.

It localises to the nucleus. Replisome component that maintains genome stability by protecting stalled or damaged replication forks. After the induction of replication stress, required for the stabilization of stalled replication forks, the efficient activation of the intra-S-phase and G/2M cell-cycle checkpoints and the maintenance of genome stability. This chain is Protein downstream neighbor of Son (Donson), found in Mus musculus (Mouse).